A 457-amino-acid chain; its full sequence is Multidrug resistance protein MdtK (457 aa).

Transmembrane regions (helical) follow at residues 11 to 31 (LLALAIPVILAQVAQTAMGFV), 53 to 73 (IWLPAILFGHGLLLALTPVIA), 93 to 113 (WLAGFVSVLVMIVLWNAGYII), 127 to 147 (AVGYLRALLWGAPGYLFFQVA), 160 to 180 (GMVMGFLGLLVNIPVNYIFIY), 188 to 208 (LGGIGCGVATAAVYWVMFIAM), 243 to 263 (LPIALALFFEVTLFAVVALLV), 276 to 296 (IALNFSSLMFVLPMSLAAAVT), 314 to 334 (AARTGLGVGICMAVVTAIFTV), 350 to 370 (VVALAAQLMLLAAVYQISDSI), 387 to 407 (IFFITFTAYWVLGLPSGYILA), and 418 to 438 (PAGFWMGFIIGLTSAAVLMML).

It belongs to the multi antimicrobial extrusion (MATE) (TC 2.A.66.1) family. MdtK subfamily.

It is found in the cell inner membrane. Its function is as follows. Multidrug efflux pump that functions probably as a Na(+)/drug antiporter. The protein is Multidrug resistance protein MdtK of Salmonella heidelberg (strain SL476).